A 155-amino-acid polypeptide reads, in one-letter code: Molybdopterin synthase catalytic subunit 2 (155 aa).

Substrate contacts are provided by residues 101 to 102 (HR), lysine 117, and 124 to 126 (KKE).

It belongs to the MoaE family. MOCS2B subfamily. As to quaternary structure, heterotetramer; composed of 2 small (MOCS2A) and 2 large (MOCS2B) subunits.

The protein resides in the cytoplasm. The enzyme catalyses 2 [molybdopterin-synthase sulfur-carrier protein]-C-terminal-Gly-aminoethanethioate + cyclic pyranopterin phosphate + H2O = molybdopterin + 2 [molybdopterin-synthase sulfur-carrier protein]-C-terminal Gly-Gly + 2 H(+). The protein operates within cofactor biosynthesis; molybdopterin biosynthesis. Its function is as follows. Catalytic subunit of the molybdopterin synthase complex, a complex that catalyzes the conversion of precursor Z into molybdopterin. Acts by mediating the incorporation of 2 sulfur atoms from thiocarboxylated MOCS2A into precursor Z to generate a dithiolene group. The polypeptide is Molybdopterin synthase catalytic subunit 2 (Aedes aegypti (Yellowfever mosquito)).